The primary structure comprises 404 residues: Cysteine desulfurase IscS (404 aa).

Residues 75-76, asparagine 155, glutamine 183, and 203-205 contribute to the pyridoxal 5'-phosphate site; these read AT and SAH. N6-(pyridoxal phosphate)lysine is present on lysine 206. Residue threonine 243 coordinates pyridoxal 5'-phosphate. Cysteine 328 (cysteine persulfide intermediate) is an active-site residue. Residue cysteine 328 participates in [2Fe-2S] cluster binding.

The protein belongs to the class-V pyridoxal-phosphate-dependent aminotransferase family. NifS/IscS subfamily. In terms of assembly, homodimer. Forms a heterotetramer with IscU, interacts with other sulfur acceptors. It depends on pyridoxal 5'-phosphate as a cofactor.

The protein resides in the cytoplasm. It carries out the reaction (sulfur carrier)-H + L-cysteine = (sulfur carrier)-SH + L-alanine. It participates in cofactor biosynthesis; iron-sulfur cluster biosynthesis. Its function is as follows. Master enzyme that delivers sulfur to a number of partners involved in Fe-S cluster assembly, tRNA modification or cofactor biosynthesis. Catalyzes the removal of elemental sulfur atoms from cysteine to produce alanine. Functions as a sulfur delivery protein for Fe-S cluster synthesis onto IscU, an Fe-S scaffold assembly protein, as well as other S acceptor proteins. The polypeptide is Cysteine desulfurase IscS (Buchnera aphidicola subsp. Acyrthosiphon pisum (strain 5A)).